The chain runs to 259 residues: Tryptophan synthase alpha chain (259 aa).

Active-site proton acceptor residues include Glu-35 and Asp-46.

This sequence belongs to the TrpA family. In terms of assembly, tetramer of two alpha and two beta chains.

The enzyme catalyses (1S,2R)-1-C-(indol-3-yl)glycerol 3-phosphate + L-serine = D-glyceraldehyde 3-phosphate + L-tryptophan + H2O. The protein operates within amino-acid biosynthesis; L-tryptophan biosynthesis; L-tryptophan from chorismate: step 5/5. In terms of biological role, the alpha subunit is responsible for the aldol cleavage of indoleglycerol phosphate to indole and glyceraldehyde 3-phosphate. The protein is Tryptophan synthase alpha chain of Methanococcus maripaludis (strain C5 / ATCC BAA-1333).